We begin with the raw amino-acid sequence, 266 residues long: MDASSSSNPDDGLQAIRLVDASDDEPYADAVAKIERCQEILGYDFRDLDLLRSALTHASGASHRLASNERLEFLGDSVLGLTVCEWLFNEYPEYSEGDLTKIKSAVVSRRSCGKVACKLGLDQCLIVGRGVTRNRSYPKSLVSDVFEAVIAALYIDGGPEIVRDRLKLWLAEEVNLAVDTQGSGNHKSVLQQFAQRELSATPVYKLIRETGPDHRKMFLMGAMVDDRRFAPAWGNNKKDAEQRAAANALAELHNAKVPYDSEQPPA.

In terms of domain architecture, RNase III spans 34–158; the sequence is IERCQEILGY…VIAALYIDGG (125 aa). E72 contributes to the Mg(2+) binding site. D76 is a catalytic residue. Positions 144 and 147 each coordinate Mg(2+). The active site involves E147. The DRBM domain occupies 185–254; it reads NHKSVLQQFA…AANALAELHN (70 aa).

The protein belongs to the ribonuclease III family. Homodimer. It depends on Mg(2+) as a cofactor.

It is found in the cytoplasm. The enzyme catalyses Endonucleolytic cleavage to 5'-phosphomonoester.. Functionally, digests double-stranded RNA. Involved in the processing of primary rRNA transcript to yield the immediate precursors to the large and small rRNAs (23S and 16S). Processes some mRNAs, and tRNAs when they are encoded in the rRNA operon. Processes pre-crRNA and tracrRNA of type II CRISPR loci if present in the organism. The protein is Ribonuclease 3 of Rhodopirellula baltica (strain DSM 10527 / NCIMB 13988 / SH1).